We begin with the raw amino-acid sequence, 125 residues long: Large ribosomal subunit protein mL51 (125 aa).

Residues 1–29 (MWSVQKLLWGCRSLLPQGCRSFSLGNRDL) constitute a mitochondrion transit peptide.

It belongs to the mitochondrion-specific ribosomal protein mL51 family. Component of the mitochondrial ribosome large subunit (39S) which comprises a 16S rRNA and about 50 distinct proteins.

The protein localises to the mitochondrion. This Xenopus laevis (African clawed frog) protein is Large ribosomal subunit protein mL51 (mrpl51).